Consider the following 327-residue polypeptide: Phenylalanine--tRNA ligase alpha subunit (327 aa).

Residue Glu-252 participates in Mg(2+) binding.

Belongs to the class-II aminoacyl-tRNA synthetase family. Phe-tRNA synthetase alpha subunit type 1 subfamily. As to quaternary structure, tetramer of two alpha and two beta subunits. Mg(2+) is required as a cofactor.

It localises to the cytoplasm. The enzyme catalyses tRNA(Phe) + L-phenylalanine + ATP = L-phenylalanyl-tRNA(Phe) + AMP + diphosphate + H(+). This chain is Phenylalanine--tRNA ligase alpha subunit, found in Tolumonas auensis (strain DSM 9187 / NBRC 110442 / TA 4).